The primary structure comprises 596 residues: Nucleotidyltransferase lcsQ (596 aa).

The transit peptide at 1–22 (MLLRLSPSRMALKRKLDSFLRN) directs the protein to the mitochondrion. Positions 475-504 (IVAHPGKPSQPADVPETPLSSGASKSKNLD) are disordered.

The protein belongs to the tRNA nucleotidyltransferase/poly(A) polymerase family.

It localises to the mitochondrion. Functionally, nucleotidyltransferase; part of the gene cluster that mediates the biosynthesis of the lipopeptide antibiotics leucinostatins that show extensive biological activities, including antimalarial, antiviral, antibacterial, antifungal, and antitumor activities, as well as phytotoxic. The function of lcsQ within the leucinostatins biosynthesis has not been identified yet. The chain is Nucleotidyltransferase lcsQ from Purpureocillium lilacinum (Paecilomyces lilacinus).